The following is a 240-amino-acid chain: Regulatory protein SdiA (240 aa).

The HTH luxR-type domain occupies 173–238 (VMTPEMNFSK…QVACYAAATG (66 aa)). Residues 197-216 (SAEIAMILSISENTVNFHQK) constitute a DNA-binding region (H-T-H motif).

Activates cell division by specifically increasing transcription from one of the two promoters that lie immediately upstream of the ftsQAZ gene cluster. Activates ydiV expression in response to extracellular autoinducer AI-1 (Vibrio fischeri autoinducer oxoC6). This chain is Regulatory protein SdiA (sdiA), found in Escherichia coli (strain K12).